The chain runs to 746 residues: Alpha-1,4-glucan:maltose-1-phosphate maltosyltransferase (746 aa).

The disordered stretch occupies residues 1-43 (MAAVQHRATTRTSNTDNSTTKTKSKATSARKSPATKRKRVSAE). The segment covering 10–32 (TRTSNTDNSTTKTKSKATSARKS) has biased composition (low complexity). Lysine 343, glutamine 403, and aspartate 438 together coordinate alpha-maltose 1-phosphate. The active-site Nucleophile is aspartate 473. Asparagine 474 provides a ligand contact to alpha-maltose 1-phosphate. Glutamate 502 (proton donor) is an active-site residue. 612-613 (KY) is a binding site for alpha-maltose 1-phosphate.

This sequence belongs to the glycosyl hydrolase 13 family. GlgE subfamily. As to quaternary structure, homodimer.

It catalyses the reaction alpha-maltose 1-phosphate + [(1-&gt;4)-alpha-D-glucosyl](n) = [(1-&gt;4)-alpha-D-glucosyl](n+2) + phosphate. Functionally, maltosyltransferase that uses maltose 1-phosphate (M1P) as the sugar donor to elongate linear or branched alpha-(1-&gt;4)-glucans. Is involved in a branched alpha-glucan biosynthetic pathway from trehalose, together with TreS, Mak and GlgB. This Bifidobacterium longum (strain NCC 2705) protein is Alpha-1,4-glucan:maltose-1-phosphate maltosyltransferase.